We begin with the raw amino-acid sequence, 238 residues long: 14-3-3 family protein artA (238 aa).

It belongs to the 14-3-3 family.

In terms of biological role, 14-3-3 family protein that plays a role in the morphological differentiation and secondary metabolism biosynthesis. Required for normal fungal morphogenesis in an environment-dependent manner, affecting the balance between production of conidiophores and the formation of sclerotia, resistant structures that are necessary for the dissemination and survival. Acts as a positive regulator of conidiation and a negative regulator of sclerotial production. Also regulates the production of secondary metabolites such as aflatoxin, but also the indole-tetramic acid mycotoxin cyclopiazonic acid (CPA) and ustiloxin, an inhibitor of microtubule assembly. The sequence is that of 14-3-3 family protein artA from Aspergillus flavus (strain ATCC 200026 / FGSC A1120 / IAM 13836 / NRRL 3357 / JCM 12722 / SRRC 167).